A 483-amino-acid polypeptide reads, in one-letter code: Glutamyl-tRNA(Gln) amidotransferase subunit A (483 aa).

Active-site charge relay system residues include Lys-76 and Ser-151. The active-site Acyl-ester intermediate is Ser-175.

The protein belongs to the amidase family. GatA subfamily. As to quaternary structure, heterotrimer of A, B and C subunits.

The enzyme catalyses L-glutamyl-tRNA(Gln) + L-glutamine + ATP + H2O = L-glutaminyl-tRNA(Gln) + L-glutamate + ADP + phosphate + H(+). Allows the formation of correctly charged Gln-tRNA(Gln) through the transamidation of misacylated Glu-tRNA(Gln) in organisms which lack glutaminyl-tRNA synthetase. The reaction takes place in the presence of glutamine and ATP through an activated gamma-phospho-Glu-tRNA(Gln). The protein is Glutamyl-tRNA(Gln) amidotransferase subunit A of Pseudomonas fluorescens (strain ATCC BAA-477 / NRRL B-23932 / Pf-5).